Here is a 968-residue protein sequence, read N- to C-terminus: RNA polymerase-associated protein RapA (968 aa).

In terms of domain architecture, Helicase ATP-binding spans 163 to 332 (EVGSRYAPRV…FARLRLLDPD (170 aa)). 176-183 (DEVGLGKT) contacts ATP. Residues 278–281 (DEAH) carry the DEAH box motif. Residues 491-655 (RVDWLIEFLK…EFADELINVL (165 aa)) enclose the Helicase C-terminal domain.

The protein belongs to the SNF2/RAD54 helicase family. RapA subfamily. Interacts with the RNAP. Has a higher affinity for the core RNAP than for the holoenzyme. Its ATPase activity is stimulated by binding to RNAP.

Transcription regulator that activates transcription by stimulating RNA polymerase (RNAP) recycling in case of stress conditions such as supercoiled DNA or high salt concentrations. Probably acts by releasing the RNAP, when it is trapped or immobilized on tightly supercoiled DNA. Does not activate transcription on linear DNA. Probably not involved in DNA repair. This chain is RNA polymerase-associated protein RapA, found in Shewanella frigidimarina (strain NCIMB 400).